We begin with the raw amino-acid sequence, 785 residues long: Toll-like receptor 2 (785 aa).

An N-terminal signal peptide occupies residues 1–17 (MSRVLWTLWVLGAVTNL). The Extracellular portion of the chain corresponds to 18 to 589 (SKEEAPDQSS…RLSVSECHRT (572 aa)). Cysteine 31 and cysteine 37 are joined by a disulfide. 19 LRR repeats span residues 54-77 (AVRS…RDCV), 78-101 (NLKA…LSLW), 102-125 (SLEH…RPLS), 126-150 (SLKF…SQLT), 151-175 (NLRI…AGLT), 176-199 (FLEE…KSIQ), 200-223 (NISY…DLSS), 224-250 (SLKH…ETHT), 251-278 (LVKK…NYVS), 279-308 (GVLE…KNIG), 309-337 (QIET…SLTE), 338-361 (DVKR…QHLK), 362-388 (SLEY…DAWP), 389-414 (SLQT…LTLK), 415-437 (NLTN…QWPE), 438-457 (KMKY…GCIP), 458-478 (KTLE…LNLP), 479-500 (QLKE…SLLP), and 501-524 (MLLV…DSFH). Asparagine 115 is a glycosylation site (N-linked (GlcNAc...) asparagine). N-linked (GlcNAc...) asparagine glycans are attached at residues asparagine 200 and asparagine 246. Cysteine 354 and cysteine 383 form a disulfide bridge. 2 N-linked (GlcNAc...) asparagine glycosylation sites follow: asparagine 415 and asparagine 443. Residues cysteine 433 and cysteine 455 are joined by a disulfide bond. Positions 525–579 (TLKTLEAGGNNFICSCEFLSFTQEQQALAKVLIDWPANYLCDSPSHVRGQQVQDV) constitute an LRRCT domain. The chain crosses the membrane as a helical span at residues 590–610 (ALVSGMCCALFLLILLTEVLC). The Cytoplasmic segment spans residues 611–785 (HRFHGLWYMR…WLNLRTAIKS (175 aa)). Positions 640-783 (VCYDAFVSYS…GFWLNLRTAI (144 aa)) constitute a TIR domain. A Glycyl lysine isopeptide (Lys-Gly) (interchain with G-Cter in ubiquitin) cross-link involves residue lysine 755. An ATG16L1-binding motif motif is present at residues 762–779 (YLEWPTDDAQQEGFWLNL).

It belongs to the Toll-like receptor family. As to quaternary structure, interacts with LY96, TLR1 and TLR6 (via extracellular domain). TLR2 seems to exist in heterodimers with either TLR1 or TLR6 before stimulation by the ligand. The heterodimers form bigger oligomers in response to their corresponding ligands as well as further heterotypic associations with other receptors such as CD14 and/or CD36. Binds MYD88 (via TIR domain). Interacts with TICAM1. Interacts with CNPY3. Interacts with ATG16L1. Interacts with PPP1R11. Interacts with TICAM2. Interacts with TIRAP. In terms of processing, ubiquitinated at Lys-755 by PPP1R11, leading to its degradation. Deubiquitinated by USP2. Post-translationally, glycosylation of Asn-443 is critical for secretion of the N-terminal ectodomain of TLR2.

The protein localises to the membrane. The protein resides in the cytoplasmic vesicle. It localises to the phagosome membrane. It is found in the membrane raft. In terms of biological role, cooperates with LY96 to mediate the innate immune response to bacterial lipoproteins and other microbial cell wall components. Cooperates with TLR1 or TLR6 to mediate the innate immune response to bacterial lipoproteins or lipopeptides. Acts via MYD88 and TRAF6, leading to NF-kappa-B activation, cytokine secretion and the inflammatory response. May also promote apoptosis in response to lipoproteins. Forms activation clusters composed of several receptors depending on the ligand, these clusters trigger signaling from the cell surface and subsequently are targeted to the Golgi in a lipid-raft dependent pathway. Forms the cluster TLR2:TLR6:CD14:CD36 in response to diacylated lipopeptides and TLR2:TLR1:CD14 in response to triacylated lipopeptides. The protein is Toll-like receptor 2 (TLR2) of Canis lupus familiaris (Dog).